Reading from the N-terminus, the 100-residue chain is Ubiquitin-related modifier 1 homolog (100 aa).

Gly100 is modified (1-thioglycine). Gly100 participates in a covalent cross-link: Glycyl lysine isopeptide (Gly-Lys) (interchain with K-? in acceptor proteins).

It belongs to the URM1 family. C-terminal thiocarboxylation occurs in 2 steps, it is first acyl-adenylated (-COAMP) via the hesA/moeB/thiF part of the MOCS3 homolog, then thiocarboxylated (-COSH) via the rhodanese domain of the MOCS3 homolog.

It localises to the cytoplasm. The protein operates within tRNA modification; 5-methoxycarbonylmethyl-2-thiouridine-tRNA biosynthesis. Its function is as follows. Acts as a sulfur carrier required for 2-thiolation of mcm(5)S(2)U at tRNA wobble positions of cytosolic tRNA(Lys), tRNA(Glu) and tRNA(Gln). Serves as sulfur donor in tRNA 2-thiolation reaction by being thiocarboxylated (-COSH) at its C-terminus by MOCS3. The sulfur is then transferred to tRNA to form 2-thiolation of mcm(5)S(2)U. Also acts as a ubiquitin-like protein (UBL) that is covalently conjugated via an isopeptide bond to lysine residues of target proteins. The thiocarboxylated form serves as substrate for conjugation and oxidative stress specifically induces the formation of UBL-protein conjugates. This chain is Ubiquitin-related modifier 1 homolog, found in Oryza sativa subsp. japonica (Rice).